The following is a 183-amino-acid chain: Ribosome-recycling factor (183 aa).

This sequence belongs to the RRF family.

The protein resides in the cytoplasm. In terms of biological role, responsible for the release of ribosomes from messenger RNA at the termination of protein biosynthesis. May increase the efficiency of translation by recycling ribosomes from one round of translation to another. The protein is Ribosome-recycling factor of Mycoplasmoides gallisepticum (strain R(low / passage 15 / clone 2)) (Mycoplasma gallisepticum).